The following is a 798-amino-acid chain: Serine/threonine-protein kinase haspin (798 aa).

Residues 1 to 110 (MAASLPGPGS…WKLRARPSLT (110 aa)) form a disordered region. At S58 the chain carries Phosphoserine. A compositionally biased stretch (acidic residues) spans 59 to 70 (QSDDPDDPDDPD). S93 is modified (phosphoserine; by AURKB). T97 bears the Phosphothreonine mark. S143 carries the phosphoserine; by AURKB modification. Residue S147 is modified to Phosphoserine. The tract at residues 275–350 (LVVGNGPEGP…KHQEATETSL (76 aa)) is disordered. The span at 300-315 (CQERGLQEAVRREHQE) shows a compositional bias: basic and acidic residues. In terms of domain architecture, Protein kinase spans 484 to 798 (LQRCEKIGEG…DLLCQHSLFK (315 aa)). Residues 490–498 (IGEGVFGEV), K511, 606–611 (EFGGID), 649–654 (DLHWGN), and 687–689 (DYT) contribute to the ATP site. D649 serves as the catalytic Proton acceptor.

It belongs to the protein kinase superfamily. Ser/Thr protein kinase family. Haspin subfamily. It depends on Mg(2+) as a cofactor. In terms of processing, autophosphorylated on both serine and threonine residues. Strongly phosphorylated during mitosis but this does not appear to significantly affect its intrinsic kinase activity. Phosphorylation by AURKB is required for full activity toward histone H3 at 'Ser-3' in mitosis. Strongly expressed in testis. Also present in thymus and bone marrow and low levels observed in prostate, intestine, lung, spleen and lymph node. Expressed in fetal skin, liver, kidney and small intestine and also in proliferating but not non-proliferating cell lines.

It localises to the nucleus. The protein localises to the chromosome. It is found in the cytoplasm. The protein resides in the cytoskeleton. Its subcellular location is the spindle. It catalyses the reaction L-seryl-[protein] + ATP = O-phospho-L-seryl-[protein] + ADP + H(+). It carries out the reaction L-threonyl-[protein] + ATP = O-phospho-L-threonyl-[protein] + ADP + H(+). With respect to regulation, constitutive activity that does not require phosphorylation. Specifically inhibited by 3-(1H-indazol-5-yl)-N-propylimidazo[1,2-b]pyridazin-6-amine (CHR-6494). Serine/threonine-protein kinase that phosphorylates histone H3 at 'Thr-3' (H3T3ph) during mitosis. May act through H3T3ph to both position and modulate activation of AURKB and other components of the chromosomal passenger complex (CPC) at centromeres to ensure proper chromatid cohesion, metaphase alignment and normal progression through the cell cycle. The sequence is that of Serine/threonine-protein kinase haspin from Homo sapiens (Human).